Consider the following 463-residue polypeptide: Glutamate--tRNA ligase 2 (463 aa).

The short motif at 11 to 21 (PSPTGYLHIGG) is the 'HIGH' region element. The 'KMSKS' region signature appears at 240-244 (KLSKR). Lys-243 serves as a coordination point for ATP.

Belongs to the class-I aminoacyl-tRNA synthetase family. Glutamate--tRNA ligase type 1 subfamily. In terms of assembly, monomer.

It is found in the cytoplasm. The catalysed reaction is tRNA(Glu) + L-glutamate + ATP = L-glutamyl-tRNA(Glu) + AMP + diphosphate. In terms of biological role, catalyzes the attachment of glutamate to tRNA(Glu) in a two-step reaction: glutamate is first activated by ATP to form Glu-AMP and then transferred to the acceptor end of tRNA(Glu). This Campylobacter jejuni subsp. jejuni serotype O:6 (strain 81116 / NCTC 11828) protein is Glutamate--tRNA ligase 2.